The primary structure comprises 240 residues: Guanine nucleotide exchange factor sopE2 (240 aa).

A GEF catalytic domain region spans residues 78–240 (LTSKTVKDFM…IANKYLQNAS (163 aa)).

The protein belongs to the GEF (guanine exchange factor) SopE family.

Its subcellular location is the secreted. In terms of biological role, activator for CDC42 by directly engaging this Rho GTPase and acting as potent guanine nucleotide exchange factor (GEF). This activation results in actin cytoskeleton rearrangements and stimulates membrane ruffling, promoting bacterial entry into non-phagocytic cells. Also activates NF-kB, p38 and ERK kinases, which are known to be involved in the induction of IL-8 expression. Chaperone InvB is required for secretion, translocation and stabilization of intracellular levels of sopE2. This is Guanine nucleotide exchange factor sopE2 (sopE2) from Salmonella typhimurium (strain LT2 / SGSC1412 / ATCC 700720).